Consider the following 258-residue polypeptide: Tritrans,polycis-undecaprenyl-diphosphate synthase (geranylgeranyl-diphosphate specific) (258 aa).

Aspartate 37 is a catalytic residue. Residue aspartate 37 participates in Mg(2+) binding. Substrate contacts are provided by residues 38–41, histidine 54, and 82–84; these read GNRR and STE. Asparagine 85 serves as the catalytic Proton acceptor. Substrate-binding positions include phenylalanine 86, arginine 88, arginine 207, and 213 to 215; that span reads RIS. Position 226 (glutamate 226) interacts with Mg(2+).

The protein belongs to the UPP synthase family. In terms of assembly, homodimer. Mg(2+) is required as a cofactor.

It carries out the reaction geranylgeranyl diphosphate + 7 isopentenyl diphosphate = tri-trans,hepta-cis-undecaprenyl diphosphate + 7 diphosphate. Its function is as follows. Catalyzes the sequential condensation of isopentenyl diphosphate (IPP) with geranylgeranyl diphosphate (GGPP) to yield (2Z,6Z,10Z,14Z,18Z,22Z,26Z,30E,34E,38E)-undecaprenyl diphosphate (tritrans,heptacis-UPP). It is probably the precursor of glycosyl carrier lipids. This is Tritrans,polycis-undecaprenyl-diphosphate synthase (geranylgeranyl-diphosphate specific) from Thermoplasma volcanium (strain ATCC 51530 / DSM 4299 / JCM 9571 / NBRC 15438 / GSS1).